The sequence spans 709 residues: G1/S-specific cyclin-E (709 aa).

5 disordered regions span residues 1–30 (MGLNAKSVCSTSSTEPNGSIVTTAPSNGEV), 43–149 (ISSS…NLSS), 162–205 (VDGQ…GSKQ), 221–289 (TVVT…PKHQ), and 642–709 (ALRA…RSNP). Polar residues-rich tracts occupy residues 7–29 (SVCSTSSTEPNGSIVTTAPSNGE), 61–70 (PSTSFSSASQ), and 91–106 (CDSQNLAASTAATSNG). Ser114, Ser115, Ser117, and Ser129 each carry phosphoserine. A compositionally biased stretch (polar residues) spans 162–175 (VDGQSTQELLSIRS). Phosphoserine occurs at positions 187, 192, 195, and 198. Positions 187–199 (SPLPDSPDSPPSP) are enriched in pro residues. Over residues 228 to 258 (EDDDLLDDSCEDYSYDEDDEDDVEEEDDDVE) the composition is skewed to acidic residues. A compositionally biased stretch (polar residues) spans 260–277 (YSSTISPASSGCSQQQAV). Phosphothreonine is present on Thr651. Over residues 677 to 709 (SSTTTCCNTAASNKGGKSSSNNSVTSCSSRSNP) the composition is skewed to low complexity.

The protein belongs to the cyclin family. Cyclin E subfamily. In terms of assembly, interacts with a member of the CDK2/CDK protein kinases to form a serine/threonine kinase holoenzyme complex. The cyclin subunit imparts substrate specificity to the complex. Interacts (via C-terminus) with Z600 (via C-terminus). In terms of tissue distribution, isoform II is ubiquitous in early embryos and, prior to mitosis 14, is rapidly degraded in all cells except the pole (germ) cells. Expressed during G1 phase in proliferating peripheral nervous system cells. Constitutive expression in embryonic cycles lacking a G1 phase.

Its subcellular location is the nucleus. In terms of biological role, essential for the control of the cell cycle at the G1/S (start) transition. Targeted by archipelago for degradation by the SFC ubiquitin ligase complex. This is G1/S-specific cyclin-E (CycE) from Drosophila melanogaster (Fruit fly).